The chain runs to 372 residues: Queuine tRNA-ribosyltransferase (372 aa).

The active-site Proton acceptor is Asp-90. Residues 90–94 (DSGGF), Asp-144, Gln-193, and Gly-220 contribute to the substrate site. The segment at 251–257 (GVGTPED) is RNA binding. Asp-270 acts as the Nucleophile in catalysis. The RNA binding; important for wobble base 34 recognition stretch occupies residues 275–279 (TRNAR). Zn(2+) is bound by residues Cys-308, Cys-310, Cys-313, and His-339.

This sequence belongs to the queuine tRNA-ribosyltransferase family. Homodimer. Within each dimer, one monomer is responsible for RNA recognition and catalysis, while the other monomer binds to the replacement base PreQ1. Requires Zn(2+) as cofactor.

It catalyses the reaction 7-aminomethyl-7-carbaguanine + guanosine(34) in tRNA = 7-aminomethyl-7-carbaguanosine(34) in tRNA + guanine. It participates in tRNA modification; tRNA-queuosine biosynthesis. Catalyzes the base-exchange of a guanine (G) residue with the queuine precursor 7-aminomethyl-7-deazaguanine (PreQ1) at position 34 (anticodon wobble position) in tRNAs with GU(N) anticodons (tRNA-Asp, -Asn, -His and -Tyr). Catalysis occurs through a double-displacement mechanism. The nucleophile active site attacks the C1' of nucleotide 34 to detach the guanine base from the RNA, forming a covalent enzyme-RNA intermediate. The proton acceptor active site deprotonates the incoming PreQ1, allowing a nucleophilic attack on the C1' of the ribose to form the product. After dissociation, two additional enzymatic reactions on the tRNA convert PreQ1 to queuine (Q), resulting in the hypermodified nucleoside queuosine (7-(((4,5-cis-dihydroxy-2-cyclopenten-1-yl)amino)methyl)-7-deazaguanosine). In Sulfurimonas denitrificans (strain ATCC 33889 / DSM 1251) (Thiomicrospira denitrificans (strain ATCC 33889 / DSM 1251)), this protein is Queuine tRNA-ribosyltransferase.